The following is a 485-amino-acid chain: Glutamate mutase epsilon subunit (485 aa).

R66 contributes to the L-glutamate binding site. G68 is a binding site for adenosylcob(III)alamin. R100 contacts L-glutamate. N123 provides a ligand contact to adenosylcob(III)alamin. L-glutamate-binding positions include 149-150 (RH), E171, and Y177. P180 is an adenosylcob(III)alamin binding site. Position 181 (Y181) interacts with L-glutamate. Adenosylcob(III)alamin-binding residues include F297, K326, E330, and I334.

Belongs to the methylaspartate mutase GlmE subunit family. Heterotetramer composed of 2 epsilon subunits (GlmE) and 2 sigma subunits (GlmS). GlmE exists as a homodimer and GlmS as a monomer. Requires adenosylcob(III)alamin as cofactor.

It carries out the reaction (2S,3S)-3-methyl-L-aspartate = L-glutamate. The protein operates within amino-acid degradation; L-glutamate degradation via mesaconate pathway; acetate and pyruvate from L-glutamate: step 1/4. Its function is as follows. Catalyzes the carbon skeleton rearrangement of L-glutamate to L-threo-3-methylaspartate ((2S,3S)-3-methylaspartate). This is Glutamate mutase epsilon subunit from Treponema denticola (strain ATCC 35405 / DSM 14222 / CIP 103919 / JCM 8153 / KCTC 15104).